The chain runs to 235 residues: Eukaryotic translation initiation factor 4E-1 (235 aa).

Residues 1–16 show a composition bias toward basic and acidic residues; it reads MAVEDTPKSVVTEEAK. The disordered stretch occupies residues 1-59; it reads MAVEDTPKSVVTEEAKPNSIENPIDRYHEEGDDAEEGEIAGGEGDGNVDESSKSGVPES. 2 EIF4G-binding regions span residues 60-63 and 70-106; these read HPLE and FDNPAVKSKQTSWGSSLRPVFTFSTVEEFWSLYNNMK. MRNA-binding positions include 78 to 83, Lys110, and 128 to 129; these read KQTSWG and WE. Cys133 and Cys171 are joined by a disulfide. The interval 154–163 is EIF4G-binding; sequence YTLLALIGEQ. MRNA contacts are provided by residues 178–183 and 223–227; these read RGKQER and KKLDR.

Belongs to the eukaryotic initiation factor 4E family. In terms of assembly, EIF4F is a multi-subunit complex, the composition of which varies with external and internal environmental conditions. It is composed of at least EIF4A, EIF4E and EIF4G. EIF4E is also known to interact with other partners. In higher plants two isoforms of EIF4F have been identified, named isoform EIF4F and isoform EIF(iso)4F. Isoform EIF4F has subunits p220 and p26, whereas isoform EIF(iso)4F has subunits p82 and p28. Interacts directly with EXA1. As to quaternary structure, (Microbial infection) Interacts with viral genome-linked protein (VPg); this interaction is possible in susceptible hosts but impaired in resistant plants. Post-translationally, according to the redox status, the Cys-133-Cys-171 disulfide bridge may have a role in regulating protein function by affecting its ability to bind capped mRNA. As to expression, expressed in all tissues except in the cells of the specialization zone of the roots.

It is found in the nucleus. The protein resides in the cytoplasm. Its function is as follows. Component of the protein complex eIF4F, which is involved in the recognition of the mRNA cap, ATP-dependent unwinding of 5'-terminal secondary structure and recruitment of mRNA to the ribosome. Recognizes and binds the 7-methylguanosine-containing mRNA cap during an early step in the initiation of protein synthesis and facilitates ribosome binding by inducing the unwinding of the mRNAs secondary structures. Key component of recessive resistance to potyviruses. (Microbial infection) Susceptibility host factor required for viral infection by recruiting viral RNAs to the host ribosomal complex via an interaction with viral genome-linked protein (VPg). The sequence is that of Eukaryotic translation initiation factor 4E-1 from Arabidopsis thaliana (Mouse-ear cress).